The primary structure comprises 692 residues: Elongation factor G (692 aa).

The tr-type G domain occupies 8 to 282; sequence ENTRNIGIMA…AVIDYLPSPL (275 aa). GTP is bound by residues 17–24, 81–85, and 135–138; these read AHIDAGKT, DTPGH, and NKMD.

It belongs to the TRAFAC class translation factor GTPase superfamily. Classic translation factor GTPase family. EF-G/EF-2 subfamily.

The protein localises to the cytoplasm. Its function is as follows. Catalyzes the GTP-dependent ribosomal translocation step during translation elongation. During this step, the ribosome changes from the pre-translocational (PRE) to the post-translocational (POST) state as the newly formed A-site-bound peptidyl-tRNA and P-site-bound deacylated tRNA move to the P and E sites, respectively. Catalyzes the coordinated movement of the two tRNA molecules, the mRNA and conformational changes in the ribosome. The chain is Elongation factor G from Bacillus cytotoxicus (strain DSM 22905 / CIP 110041 / 391-98 / NVH 391-98).